A 184-amino-acid polypeptide reads, in one-letter code: Large ribosomal subunit protein uL22 (184 aa).

A disordered region spans residues 160–184 (PEEEVAQKKKISQKKLKKQKLMARE). Positions 167–184 (KKKISQKKLKKQKLMARE) are enriched in basic residues.

Belongs to the universal ribosomal protein uL22 family. Component of the large ribosomal subunit. As to expression, expressed in pancreas, lung, colon, cystic duct, gall bladder, kidney and liver. Expressed at high levels in the well differentiated pancreatic tumor cell lines HPAF, COLO 357 and Capan-1, the moderately differentiated pancreatic tumor cell lines T3M-4, AsPc-1 and BxPc-3, the poorly differentiated pancreatic tumor cell line MIA PaCa-2, and the pancreatic tumor cell lines of undefined differentiation status such as SW979. Expressed at lower levels in the poorly differentiated pancreatic tumor cell lines HCG-25 and PANC-1.

It is found in the cytoplasm. Its function is as follows. Component of the large ribosomal subunit. The ribosome is a large ribonucleoprotein complex responsible for the synthesis of proteins in the cell. This is Large ribosomal subunit protein uL22 (RPL17) from Homo sapiens (Human).